Consider the following 271-residue polypeptide: 3-methyl-2-oxobutanoate hydroxymethyltransferase (271 aa).

Residues D53 and D92 each coordinate Mg(2+). 3-methyl-2-oxobutanoate contacts are provided by residues 53 to 54 (DS), D92, and K120. E122 is a Mg(2+) binding site. Residue E189 is the Proton acceptor of the active site.

Belongs to the PanB family. Homodecamer; pentamer of dimers. Requires Mg(2+) as cofactor.

The protein resides in the cytoplasm. It catalyses the reaction 3-methyl-2-oxobutanoate + (6R)-5,10-methylene-5,6,7,8-tetrahydrofolate + H2O = 2-dehydropantoate + (6S)-5,6,7,8-tetrahydrofolate. Its pathway is cofactor biosynthesis; (R)-pantothenate biosynthesis; (R)-pantoate from 3-methyl-2-oxobutanoate: step 1/2. Functionally, catalyzes the reversible reaction in which hydroxymethyl group from 5,10-methylenetetrahydrofolate is transferred onto alpha-ketoisovalerate to form ketopantoate. The protein is 3-methyl-2-oxobutanoate hydroxymethyltransferase of Paraburkholderia xenovorans (strain LB400).